The sequence spans 190 residues: UPF0149 protein NT01EI_3357 (190 aa).

Belongs to the UPF0149 family.

This is UPF0149 protein NT01EI_3357 from Edwardsiella ictaluri (strain 93-146).